A 224-amino-acid chain; its full sequence is Envelope glycoprotein L (224 aa).

The signal sequence occupies residues 1 to 22 (MGILGWVGLIAVGVLCVRGGLS). The interaction with gH stretch occupies residues 20 to 161 (GLSSTEYVIR…FDYSRTRRCV (142 aa)). The tract at residues 20–161 (GLSSTEYVIR…FDYSRTRRCV (142 aa)) is interaction with gL. A gL alphaherpesvirus-type domain is found at 23-201 (STEYVIRSRV…LTTPPPIIAT (179 aa)). 2 cysteine pairs are disulfide-bonded: Cys44–Cys76 and Cys149–Cys160. Residues 161 to 224 (VGRQDLGPTN…RRRRPHSRRL (64 aa)) are disordered. Asn170 carries N-linked (GlcNAc...) asparagine; by host glycosylation. The span at 213 to 224 (KSRRRRPHSRRL) shows a compositional bias: basic residues.

The protein belongs to the herpesviridae glycoprotein L (gL) family. Alphaherpesvirinae gL subfamily. In terms of assembly, interacts with glycoprotein H (gH); this interaction is necessary for the correct processing and cell surface expression of gH. The heterodimer gH/gL seems to interact with gB trimers during fusion. N-glycosylated, O-glycosylated, and sialylated.

The protein localises to the virion membrane. It is found in the host cell membrane. Its subcellular location is the host Golgi apparatus. The protein resides in the host trans-Golgi network. Functionally, the heterodimer glycoprotein H-glycoprotein L is required for the fusion of viral and plasma membranes leading to virus entry into the host cell. Acts as a functional inhibitor of gH and maintains gH in an inhibited form. Upon binding to host integrins, gL dissociates from gH leading to activation of the viral fusion glycoproteins gB and gH. This chain is Envelope glycoprotein L, found in Human herpesvirus 1 (strain KOS) (HHV-1).